We begin with the raw amino-acid sequence, 102 residues long: MNKAILHTIIIYTLASCPYCIKAKALLDEKNVVYEEIEVSNFTQEEKEKFIKKSGGKKTVPQIFIDNIHVGGCDALFDLEKEGRLDKLLEGQPKKKMPAAGA.

The Glutaredoxin domain maps to 1 to 96 (MNKAILHTII…KLLEGQPKKK (96 aa)). Cysteines 17 and 20 form a disulfide.

Belongs to the glutaredoxin family. As to quaternary structure, monomer.

It localises to the cytoplasm. Its function is as follows. Has a glutathione-disulfide oxidoreductase activity in the presence of NADPH and glutathione reductase. Reduces low molecular weight disulfides and proteins. The chain is Glutaredoxin 1 (grxC1) from Rickettsia felis (strain ATCC VR-1525 / URRWXCal2) (Rickettsia azadi).